Reading from the N-terminus, the 367-residue chain is Eukaryotic translation initiation factor 3 subunit H (367 aa).

In terms of domain architecture, MPN spans 14–166 (VQVEALVVMK…LRAFRLSPNF (153 aa)).

The protein belongs to the eIF-3 subunit H family. Component of the eukaryotic translation initiation factor 3 (eIF-3) complex.

The protein resides in the cytoplasm. Functionally, component of the eukaryotic translation initiation factor 3 (eIF-3) complex, which is involved in protein synthesis of a specialized repertoire of mRNAs and, together with other initiation factors, stimulates binding of mRNA and methionyl-tRNAi to the 40S ribosome. The eIF-3 complex specifically targets and initiates translation of a subset of mRNAs involved in cell proliferation. The sequence is that of Eukaryotic translation initiation factor 3 subunit H from Sclerotinia sclerotiorum (strain ATCC 18683 / 1980 / Ss-1) (White mold).